The following is a 186-amino-acid chain: Nicotinamide-nucleotide adenylyltransferase (186 aa).

This sequence belongs to the archaeal NMN adenylyltransferase family.

It localises to the cytoplasm. It carries out the reaction beta-nicotinamide D-ribonucleotide + ATP + H(+) = diphosphate + NAD(+). It participates in cofactor biosynthesis; NAD(+) biosynthesis; NAD(+) from nicotinamide D-ribonucleotide: step 1/1. The sequence is that of Nicotinamide-nucleotide adenylyltransferase from Pyrococcus abyssi (strain GE5 / Orsay).